The primary structure comprises 152 residues: Deoxyuridine 5'-triphosphate nucleotidohydrolase (152 aa).

Residues R71 to G73, N84, L88 to D90, and M98 each bind substrate.

Belongs to the dUTPase family. Mg(2+) is required as a cofactor.

It catalyses the reaction dUTP + H2O = dUMP + diphosphate + H(+). It functions in the pathway pyrimidine metabolism; dUMP biosynthesis; dUMP from dCTP (dUTP route): step 2/2. Functionally, this enzyme is involved in nucleotide metabolism: it produces dUMP, the immediate precursor of thymidine nucleotides and it decreases the intracellular concentration of dUTP so that uracil cannot be incorporated into DNA. The protein is Deoxyuridine 5'-triphosphate nucleotidohydrolase of Enterobacter sp. (strain 638).